We begin with the raw amino-acid sequence, 276 residues long: Phospholipid phosphatase 2 (276 aa).

At 1–4 (MERR) the chain is on the cytoplasmic side. Residues 5–25 (WVFVLLDVLCVLVASLPFIIL) traverse the membrane as a helical segment. Residues 26 to 51 (TLVNAPYKRGFYCGDDSIRYPYRPDT) lie on the Lumenal side of the membrane. A helical transmembrane segment spans residues 52–72 (ITHGLMAGVIITATVILVSLG). Topologically, residues 73–87 (EAYLVYTDRLYSRSN) are cytoplasmic. A helical transmembrane segment spans residues 88–108 (FNNYVAAIYKVLGTFLFGAAV). Residues 109–161 (SQSLTDLAKYMIGRLRPSFLAVCDPDWSQVNCSGYVQLEVCRGSPANVTEARL) lie on the Lumenal side of the membrane. The phosphatase sequence motif I stretch occupies residues 117–125 (KYMIGRLRP). 2 N-linked (GlcNAc...) asparagine glycosylation sites follow: Asn-139 and Asn-155. A helical membrane pass occupies residues 162-182 (SFYSGHSSFGMYCMLFLALYV). Residues 164-167 (YSGH) form a phosphatase sequence motif II region. The active-site Proton donors is His-167. The Cytoplasmic segment spans residues 183 to 189 (QARLCWK). A helical membrane pass occupies residues 190-210 (WARLLRPTVQFFLVAFAIYVG). Topologically, residues 211 to 218 (YTRVSDHK) are lumenal. The tract at residues 212–223 (TRVSDHKHHWSD) is phosphatase sequence motif III. The active-site Nucleophile is the His-219. Residues 219 to 239 (HHWSDVLVGLLQGALVACLTV) form a helical membrane-spanning segment. The Cytoplasmic portion of the chain corresponds to 240-276 (RYVSDFFKSRPPQPCQEDEVPERKPSLSLTLTLGDRP). The segment at 251-276 (PQPCQEDEVPERKPSLSLTLTLGDRP) is disordered.

It belongs to the PA-phosphatase related phosphoesterase family. In terms of assembly, forms functional homodimers and homooligomers. Can also form heterooligomers with PLPP1 and PLPP3. Post-translationally, N-glycosylated. In terms of tissue distribution, expressed at high levels in lung, liver and kidney; at low levels in heart and brain, and was not detected in skeletal muscle.

It is found in the membrane. It localises to the cell membrane. The protein resides in the early endosome membrane. The protein localises to the endoplasmic reticulum membrane. The catalysed reaction is a 1,2-diacyl-sn-glycero-3-phosphate + H2O = a 1,2-diacyl-sn-glycerol + phosphate. The enzyme catalyses 1,2-dihexadecanoyl-sn-glycero-3-phosphate + H2O = 1,2-dihexadecanoyl-sn-glycerol + phosphate. It catalyses the reaction 1,2-di-(9Z-octadecenoyl)-sn-glycero-3-phosphate + H2O = 1,2-di-(9Z-octadecenoyl)-sn-glycerol + phosphate. It carries out the reaction a monoacyl-sn-glycero-3-phosphate + H2O = a monoacylglycerol + phosphate. The catalysed reaction is (9Z)-octadecenoyl-sn-glycero-3-phosphate + H2O = (9Z-octadecenoyl)-glycerol + phosphate. The enzyme catalyses sphing-4-enine 1-phosphate + H2O = sphing-4-enine + phosphate. It catalyses the reaction an N-acylsphing-4-enine 1-phosphate + H2O = an N-acylsphing-4-enine + phosphate. It carries out the reaction N-(octanoyl)-sphing-4-enine-1-phosphate + H2O = N-octanoylsphing-4-enine + phosphate. The catalysed reaction is N-(9Z-octadecenoyl)-ethanolamine phosphate + H2O = N-(9Z-octadecenoyl) ethanolamine + phosphate. Its pathway is lipid metabolism; phospholipid metabolism. Its activity is regulated as follows. Magnesium-independent phospholipid phosphatase. Insensitive to N-ethylmaleimide. Its function is as follows. Magnesium-independent phospholipid phosphatase that catalyzes the dephosphorylation of a variety of glycerolipid and sphingolipid phosphate esters including phosphatidate/PA, lysophosphatidate/LPA, sphingosine 1-phosphate/S1P and ceramide 1-phosphate/C1P. Has no apparent extracellular phosphatase activity and therefore most probably acts intracellularly. Also acts on N-oleoyl ethanolamine phosphate/N-(9Z-octadecenoyl)-ethanolamine phosphate, a potential physiological compound. Through dephosphorylation of these bioactive lipid mediators produces new bioactive compounds and may regulate signal transduction in different cellular processes. Indirectly regulates, for instance, cell cycle G1/S phase transition through its phospholipid phosphatase activity. This is Phospholipid phosphatase 2 from Mus musculus (Mouse).